The following is an 895-amino-acid chain: Androgen receptor (895 aa).

The modulating stretch occupies residues Met1–Lys533. The tract at residues Met1 to Ala562 is interaction with ZNF318. Disordered stretches follow at residues Val33 to Leu150 and Gln178 to Gly211. 2 stretches are compositionally biased toward low complexity: residues Ala44 to Gln81 and Gln178 to Ala200. Phosphoserine; by CDK9 is present on Ser65. Position 79 is a phosphoserine (Ser79). The segment covering Pro201–Gly211 has biased composition (polar residues). At Tyr208 the chain carries Phosphotyrosine; by CSK. The residue at position 241 (Ser241) is a Phosphoserine. Tyr252 carries the post-translational modification Phosphotyrosine; by CSK and TNK2. Phosphotyrosine; by CSK occurs at positions 292, 331, 342, and 347. Position 348 is a phosphotyrosine; by CSK and TNK2 (Tyr348). Lys371 is covalently cross-linked (Glycyl lysine isopeptide (Lys-Gly) (interchain with G-Cter in SUMO)). Residue Tyr378 is modified to Phosphotyrosine; by CSK. Lys496 is covalently cross-linked (Glycyl lysine isopeptide (Lys-Gly) (interchain with G-Cter in SUMO)). Residues Tyr510 and Tyr527 each carry the phosphotyrosine; by CSK modification. The interaction with LPXN stretch occupies residues Tyr527 to Thr894. Residues Thr534–Leu607 constitute a DNA-binding region (nuclear receptor). 2 NR C4-type zinc fingers span residues Cys535–Cys555 and Cys571–Cys595. Residues Tyr547 to Val637 form an interaction with HIPK3 region. The interval Gln567–Thr894 is interaction with CCAR1. Residues Met600 to Thr894 are interaction with KAT7. Ser626 carries the post-translational modification Phosphoserine; by STK4/MST1. One can recognise an NR LBD domain in the interval Glu644–Ile875. 17beta-hydroxy-5alpha-androstan-3-one-binding residues include Asn681 and Arg728. Residues Lys821 and Lys823 each participate in a glycyl lysine isopeptide (Lys-Gly) (interchain with G-Cter in ubiquitin) cross-link. Residue Thr853 coordinates 17beta-hydroxy-5alpha-androstan-3-one. Tyr891 carries the phosphotyrosine; by CSK modification.

It belongs to the nuclear hormone receptor family. NR3 subfamily. Binds DNA as a homodimer. Part of a ternary complex containing AR, EFCAB6/DJBP and PARK7. Interacts with HIPK3 and NR0B2 in the presence of androgen. The ligand binding domain interacts with KAT7/HBO1 in the presence of dihydrotestosterone. Interacts with EFCAB6/DJBP, PQBP1, RANBP9, RBAK, SPDEF, SRA1, TGFB1I1 and RREB1. Interacts with ZMIZ1/ZIMP10 and ZMIZ2/ZMIP7 which both enhance its transactivation activity. Interacts with SLC30A9 and RAD54L2/ARIP4. Interacts with MACROD1 (via macro domain). Interacts via the ligand-binding domain with LXXLL and FXXLF motifs from NCOA1, NCOA2, NCOA3 and MAGEA11. Interacts (via nuclear receptor DNA binding domain and nuclear receptor ligand binding domain) with NCOA4. The AR N-terminal poly-Gln region binds Ran resulting in enhancement of AR-mediated transactivation. Ran-binding decreases as the poly-Gln length increases. Interacts with HIP1 (via coiled coil domain). Interacts (via ligand-binding domain) with TRIM68. Interacts with TNK2. Interacts with USP26. Interacts with RNF6. Interacts (regulated by RNF6 probably through polyubiquitination) with RNF14; regulates AR transcriptional activity. Interacts with PRMT2 and TRIM24. Interacts with RACK1. Interacts with RANBP10; this interaction enhances dihydrotestosterone-induced AR transcriptional activity. Interacts with PRPF6 in a hormone-independent way; this interaction enhances dihydrotestosterone-induced AR transcriptional activity. Interacts with STK4/MST1. Interacts with ZIPK/DAPK3. Interacts with LPXN. Interacts with MAK. Part of a complex containing AR, MAK and NCOA3. Interacts with CRY1. Interacts with CCAR1 and GATA2. Interacts with ZNF318. Interacts with BUD31. Interacts with ARID4A. Interacts with ARID4B. Interacts (via NR LBD domain) with ZBTB7A; the interaction is direct and androgen-dependent. Interacts with NCOR1. Interacts with NCOR2. Interacts with CRY2 in a ligand-dependent manner. Post-translationally, phosphorylated in prostate cancer cells in response to several growth factors including EGF. Phosphorylation is induced by c-Src kinase (CSK). Tyr-510 is one of the major phosphorylation sites and an increase in phosphorylation and Src kinase activity is associated with prostate cancer progression. Phosphorylation by TNK2 enhances the DNA-binding and transcriptional activity. Phosphorylation at Ser-65 by CDK9 regulates AR promoter selectivity and cell growth. Sumoylated on Lys-371 (major) and Lys-496. Ubiquitinated. Deubiquitinated by USP26. 'Lys-6' and 'Lys-27'-linked polyubiquitination by RNF6 modulates AR transcriptional activity and specificity. In terms of processing, palmitoylated by ZDHHC7 and ZDHHC21. Palmitoylation is required for plasma membrane targeting and for rapid intracellular signaling via ERK and AKT kinases and cAMP generation.

The protein resides in the nucleus. It localises to the cytoplasm. In terms of biological role, steroid hormone receptors are ligand-activated transcription factors that regulate eukaryotic gene expression and affect cellular proliferation and differentiation in target tissues. Transcription factor activity is modulated by bound coactivator and corepressor proteins like ZBTB7A that recruits NCOR1 and NCOR2 to the androgen response elements/ARE on target genes, negatively regulating androgen receptor signaling and androgen-induced cell proliferation. Transcription activation is also down-regulated by NR0B2. Activated, but not phosphorylated, by HIPK3 and ZIPK/DAPK3. The polypeptide is Androgen receptor (AR) (Macaca mulatta (Rhesus macaque)).